Reading from the N-terminus, the 1417-residue chain is Cytoadherence-linked asexual protein 3.1 (1417 aa).

Residues 1-24 (MVSFFKTPIFILIIFLYLNEKVIC) form the signal peptide. Intrachain disulfides connect C333–C361, C407–C413, C517–C545, and C521–C542. A helical transmembrane segment spans residues 1204 to 1224 (LANGFMYAFCFFAISQMYAYF). The interval 1383–1417 (TYIDTEKMNEADSADSDDEKDSDTPDDELMISRFH) is disordered. Residues 1394 to 1411 (DSADSDDEKDSDTPDDEL) are compositionally biased toward acidic residues.

In terms of assembly, self-associates. Component of the RhopH complex. RhopH complex is at least composed of CLAG3.1/CLAG3.2, RhopH2 and RhopH3 with a 1:1:1 subunit stoichiometry. CLAG3.1/CLAG3.2 mediates subunit association through independent contacts with RhopH2 and RhopH3, which do not directly interact with one another. Interacts with RhopH2. Interacts with RhopH3.

It is found in the host cell membrane. It localises to the host cytoplasm. The protein resides in the cytoplasmic vesicle. Its subcellular location is the secretory vesicle. The protein localises to the rhoptry. Functionally, participates in the formation of new permeability pathways in Plasmodium-infected erythrocytes enabling the uptake of nutrients from the blood plasma. This Plasmodium falciparum protein is Cytoadherence-linked asexual protein 3.1.